The primary structure comprises 492 residues: Beclin 1-associated autophagy-related key regulator (492 aa).

Residue Ser-29 is modified to Phosphoserine. The tract at residues 43 to 58 (CPLCNTTRRRLTCAKC) is cysteine repeats. A coiled-coil region spans residues 71–180 (DRERFIDKKE…KLGDLVEKKT (110 aa)). The tract at residues 410–473 (PGVAGESDES…PIASSSAGGM (64 aa)) is disordered. The interval 413–492 (AGESDESGDE…SWFKAYTGHR (80 aa)) is BATS. The span at 415–433 (ESDESGDERVSDEETDLGT) shows a compositional bias: acidic residues. Phosphoserine is present on Ser-416. Thr-429 carries the post-translational modification Phosphothreonine. Residues 448 to 473 (SQSVEVSQSQSTQASPPIASSSAGGM) are compositionally biased toward low complexity.

Belongs to the ATG14 family. In terms of assembly, forms homooligomers; homo-oligomerization is essential for the roles in membrane tethering and enhancement of SNARE-mediated fusion. Component of the PI3K (PI3KC3/PI3K-III/class III phosphatidylinositol 3-kinase) complex I (PI3KC3-C1) in which the core composed of the catalytic subunit PIK3C3, the regulatory subunit PIK3R4 and BECN1 is associated with ATG14. PI3KC3-C1 displays a V-shaped architecture with PIK3R4 serving as a bridge between PIK3C3 and the ATG14:BECN1 subcomplex. PI3KC3-C1 can associate with further regulatory subunits. Interacts with PIK3CB. Interacts (via coiled-coil domain) with BECN2 (via coiled-coil domain); this interaction is tighter than BECN2 self-association. Interacts with the STX17-SNAP29 binary t-SNARE complex. Interacts with NRBF2. Interacts with PIK3C3 and BECN1; this interaction is increased in the absence of TMEM39A. Interacts with STEEP1; the interaction is required for trafficking of STING1 from the endoplasmic reticulum. Interacts with ARMC3 (via ARM domains). Post-translationally, ubiquitinated via 'Lys-6', 'Lys-11' and 'Lys-63'-linked polyubiquitin chains on multiple lysines by MARCHF7, leading to ATG14 aggregation and loss of interaction with STX17.

The protein localises to the cytoplasm. The protein resides in the endoplasmic reticulum membrane. Its subcellular location is the preautophagosomal structure membrane. It localises to the cytoplasmic vesicle. It is found in the autophagosome membrane. Its function is as follows. Required for both basal and inducible autophagy. Determines the localization of the autophagy-specific PI3-kinase complex PI3KC3-C1. Plays a role in autophagosome formation and MAP1LC3/LC3 conjugation to phosphatidylethanolamine. Promotes BECN1 translocation from the trans-Golgi network to autophagosomes. Enhances PIK3C3 activity in a BECN1-dependent manner. Essential for the autophagy-dependent phosphorylation of BECN1. Stimulates the phosphorylation of BECN1, but suppresses the phosphorylation PIK3C3 by AMPK. Binds to STX17-SNAP29 binary t-SNARE complex on autophagosomes and primes it for VAMP8 interaction to promote autophagosome-endolysosome fusion. Modulates the hepatic lipid metabolism. The sequence is that of Beclin 1-associated autophagy-related key regulator from Homo sapiens (Human).